Reading from the N-terminus, the 69-residue chain is Conotoxin Eb6.20 (69 aa).

The N-terminal stretch at 1-17 is a signal peptide; that stretch reads VLIIAVLFLTACQLTTA. The propeptide occupies 18–41; the sequence is ETYSRGRQKHRARRSTDKNSKWTR. Disulfide bonds link Cys43-Cys57, Cys50-Cys61, and Cys56-Cys68.

The protein belongs to the conotoxin O1 superfamily. In terms of tissue distribution, expressed by the venom duct.

It is found in the secreted. This Conus ebraeus (Hebrew cone) protein is Conotoxin Eb6.20 (E1).